The sequence spans 574 residues: Arginine--tRNA ligase (574 aa).

Residues 126-136 (PNIAKRMHVGH) carry the 'HIGH' region motif.

Belongs to the class-I aminoacyl-tRNA synthetase family. As to quaternary structure, monomer.

Its subcellular location is the cytoplasm. The enzyme catalyses tRNA(Arg) + L-arginine + ATP = L-arginyl-tRNA(Arg) + AMP + diphosphate. The protein is Arginine--tRNA ligase of Chloroflexus aurantiacus (strain ATCC 29366 / DSM 635 / J-10-fl).